Reading from the N-terminus, the 116-residue chain is UPF0102 protein LA_2381 (116 aa).

The protein belongs to the UPF0102 family.

The polypeptide is UPF0102 protein LA_2381 (Leptospira interrogans serogroup Icterohaemorrhagiae serovar Lai (strain 56601)).